Consider the following 881-residue polypeptide: Probable intermembrane transport protein HI_1672 (881 aa).

A helical membrane pass occupies residues 30–49 (FWLLPFIALCIGAILFFQIV).

The protein belongs to the PqiB family.

It is found in the cell inner membrane. The polypeptide is Probable intermembrane transport protein HI_1672 (Haemophilus influenzae (strain ATCC 51907 / DSM 11121 / KW20 / Rd)).